A 64-amino-acid chain; its full sequence is MSKLVKTLTISEISKAQNNGGKPAWCWYTLAMCGAGYDSGTCDYMYSHCFGIKHHSSGSSSYHC.

Positions Met-1–Gly-21 are cleaved as a signal peptide. 2 disulfide bridges follow: Cys-26-Cys-49 and Cys-33-Cys-42. Ser-39 is a glycosylation site (O-linked (GlcNAc) serine). A glycan (S-linked (GlcNAc) cysteine) is linked at Cys-64.

The protein resides in the secreted. In terms of biological role, has antibacterial activity against L.plantarum ATCC 8014. In purified form, the activity is bacteriostatic (IC(50)=2 nM) rather than bactericidal. This chain is Bacteriocin glycocin F, found in Lactiplantibacillus plantarum (Lactobacillus plantarum).